The chain runs to 724 residues: MADEDLIFCLEGVDGGRCSRAGHNADSDTDSDDDEGYFICPITDDHMSNQNVSSKVQSYYSNLTKTECGSTGSPASSFHFKEAWKHAIEKAKHMPDPWAEFHLEDIATEHATRHRYNAVTGEWLKDEVLIKMASQPFGRGAMRECFRTKKLSNFLHAQQWKGASNYVAKRYIEPVDRSVYFEDVQLQMEAKLWGEDYNRHKPPKQVDIMQMCIIELKDRPGQPLFHLEHYIEGKYIKYNSNSGFVRDDNIRLTPQAFSHFTFERSGHQLIVVDIQGVGDLYTDPQIHTEKGTDFGDGNLGVRGMALFFYSHACNRICQSMGLTPFDLSPREQDAVNQSTRLLQSAKTILRGTEEKCGSPRIRTLSSSRPPLLLRLSENSGDENMSDVTFDSLPSSPSSATPHSQKLDHLHWPVFGDLDNMGPRDHDRMDNHRDSENSGDSGYPSEKRSDLDDPEPREHGHSNGNRRHESDEDSLGSSGRVCVETWNLLNPSRLHLPRPSAVALEVQRLNALDLGRKIGKSVLGKVHLAMVRYHEGGRFCEKDEEWDRESAIFHLEHAADLGELEAIVGLGLMYSQLPHHILADVSLKETEENKTKGFDYLLKAAEAGDRHSMILVARAFDTGLNLSPDRCQDWSEALHWYNTALETTDCDEGGEYDGIQDEPQYALLAREAEMLLTGGFGLDKNPQRSGDLYTQAAEAAMEAMKGRLANQYYEKAEEAWAQMEE.

The residue at position 2 (Ala-2) is an N-acetylalanine. A Phosphoserine modification is found at Ser-27. Position 61 is a phosphoserine; by autocatalysis (Ser-61). Residues Ser-70, Ser-73, and Ser-77 each carry the phosphoserine modification. Residues 80 to 93 (FKEAWKHAIEKAKH) form a calmodulin-binding region. An Alpha-type protein kinase domain is found at 115 to 325 (RYNAVTGEWL…ICQSMGLTPF (211 aa)). Phosphoserine is present on Ser-242. 295 to 301 (GDGNLGV) contacts ATP. Thr-347 and Thr-352 each carry phosphothreonine; by autocatalysis. A disordered region spans residues 353 to 476 (EEKCGSPRIR…HESDEDSLGS (124 aa)). A Phosphoserine; by MAPK13 and CDK1 modification is found at Ser-358. Residues 358–376 (SPRIRTLSSSRPPLLLRLS) are compositionally biased toward low complexity. Position 365 is a phosphoserine; by autocatalysis, RPS6KA1 and RPS6KB1 (Ser-365). The span at 385–403 (SDVTFDSLPSSPSSATPHS) shows a compositional bias: polar residues. Ser-391 carries the post-translational modification Phosphoserine. Phosphoserine; by AMPK is present on Ser-397. Basic and acidic residues-rich tracts occupy residues 421-435 (GPRDHDRMDNHRDSE) and 444-469 (SEKRSDLDDPEPREHGHSNGNRRHES). Ser-434, Ser-444, and Ser-469 each carry phosphoserine. A Phosphoserine; by autocatalysis modification is found at Ser-473. Residue Ser-476 is modified to Phosphoserine. The residue at position 499 (Ser-499) is a Phosphoserine; by PKA.

The protein belongs to the protein kinase superfamily. Alpha-type protein kinase family. In terms of assembly, monomer or homodimer. Interacts with Calmodulin/CALM1; this interaction is strictly required for phosphorylation activity. Post-translationally, autophosphorylated at multiple residues, Thr-347 being the major site. Phosphorylated by AMP-activated protein kinase AMPK at Ser-397 leading to EEF2K activation and protein synthesis inhibition. Phosphorylated by TRPM7 at Ser-77 resulting in improved protein stability, higher EE2F phosphorylated and subsequently reduced rate of protein synthesis. Phosphorylation by other kinases such as CDK1 and MAPK13 at Ser-358 or RPS6KA1 and RPS6KB1 at Ser-365 instead decrease EEF2K activity and promote protein synthesis. In terms of tissue distribution, ubiquitously expressed. Particularly abundant in skeletal muscle and heart.

It catalyses the reaction [translation elongation factor 2] + ATP = [translation elongation factor 2]-phosphate + ADP + H(+). With respect to regulation, undergoes calcium/calmodulin-dependent intramolecular autophosphorylation, and this results in it becoming partially calcium/calmodulin-independent. Threonine kinase that regulates protein synthesis by controlling the rate of peptide chain elongation. Upon activation by a variety of upstream kinases including AMPK or TRPM7, phosphorylates the elongation factor EEF2 at a single site, renders it unable to bind ribosomes and thus inactive. In turn, the rate of protein synthesis is reduced. The polypeptide is Eukaryotic elongation factor 2 kinase (Eef2k) (Mus musculus (Mouse)).